The primary structure comprises 684 residues: Galactocerebrosidase (684 aa).

The signal sequence occupies residues 1 to 42; it reads MANSQPKASQQRQAKVMTAAAGSASRVAVPLLLCALLVPGGA. Substrate is bound by residues Thr-109, Trp-151, and Asn-197. The Proton donor/acceptor role is filled by Glu-198. Glu-274 functions as the Nucleophile in the catalytic mechanism. Cys-287 and Cys-394 are disulfide-bonded. Residues Asn-300 and Asn-379 are each glycosylated (N-linked (GlcNAc...) asparagine). A substrate-binding site is contributed by Arg-396. 4 N-linked (GlcNAc...) asparagine glycosylation sites follow: Asn-403, Asn-558, Asn-601, and Asn-645.

It belongs to the glycosyl hydrolase 59 family. Detected in brain and kidney.

It localises to the lysosome. It carries out the reaction a beta-D-galactosyl-(1&lt;-&gt;1')-N-acylsphing-4-enine + H2O = an N-acylsphing-4-enine + D-galactose. The catalysed reaction is a D-galactosylceramide + H2O = an N-acyl-sphingoid base + D-galactose. It catalyses the reaction beta-D-galactosyl-(1&lt;-&gt;1)-sphing-4-enine + H2O = sphing-4-enine + D-galactose. Functionally, hydrolyzes the galactose ester bonds of glycolipids such as galactosylceramide and galactosylsphingosine. Enzyme with very low activity responsible for the lysosomal catabolism of galactosylceramide, a major lipid in myelin, kidney and epithelial cells of small intestine and colon. This Mus musculus (Mouse) protein is Galactocerebrosidase.